The following is a 68-amino-acid chain: UPF0434 protein BURPS668_0926 (68 aa).

It belongs to the UPF0434 family.

This is UPF0434 protein BURPS668_0926 from Burkholderia pseudomallei (strain 668).